We begin with the raw amino-acid sequence, 383 residues long: Presenilin-associated rhomboid-like protein A, mitochondrial (383 aa).

The N-terminal 37 residues, 1 to 37 (MAWRSCFMKWTQINSINASSLCPKSTRLNIHPQQRCG), are a transit peptide targeting the mitochondrion. The disordered stretch occupies residues 35-75 (RCGFRKTERPSESKKGVQETEAEAGGHNRAVPPKPVPPLPP). Residues 38–83 (FRKTERPSESKKGVQETEAEAGGHNRAVPPKPVPPLPPRRPHQLFR) are Mitochondrial matrix-facing. The segment covering 39 to 52 (RKTERPSESKKGVQ) has biased composition (basic and acidic residues). Positions 66–75 (PPKPVPPLPP) are enriched in pro residues. Residues 84-104 (PLVFTVGFTGCSFGAAAILQY) form a helical membrane-spanning segment. The Mitochondrial intermembrane segment spans residues 105–168 (ESVKSRVQLA…FWSGLSEGQK (64 aa)). A helical membrane pass occupies residues 169 to 189 (TVTGIIALNTVVLCCWRVPAM). The Mitochondrial matrix portion of the chain corresponds to 190 to 219 (QRFLVKYFTSNPASKTRCLPMVLSSFSHYS). The chain crosses the membrane as a helical span at residues 220 to 240 (VIHMVVNMYVLWTFSSSIVSL). Over 241 to 245 (LGREQ) the chain is Mitochondrial intermembrane. Residues 246 to 266 (FLALYLSGGVISTFVSYVFKT) traverse the membrane as a helical segment. At 267–271 (ATGRL) the chain is on the mitochondrial matrix side. A helical transmembrane segment spans residues 272 to 292 (GPSLGASGSIMTVLAAVCTKI). Ser278 (nucleophile) is an active-site residue. At 293-298 (PEAKLG) the chain is on the mitochondrial intermembrane side. A helical membrane pass occupies residues 299–319 (IVLLPVISFSAGNALKALVAL). Topologically, residues 320–334 (DIAGLVLGWRFFDHA) are mitochondrial matrix. The helical transmembrane segment at 335 to 355 (AHLGGALFGVWYIGYGHELIW) threads the bilayer. The active site involves His336. Residues 356–383 (RKREPLIKFWHELRNMSPGRPGPGGGGG) are Mitochondrial intermembrane-facing.

It belongs to the peptidase S54 family.

It is found in the mitochondrion inner membrane. It carries out the reaction Cleaves type-1 transmembrane domains using a catalytic dyad composed of serine and histidine that are contributed by different transmembrane domains.. Functionally, required for the control of apoptosis during postnatal growth. Essential for proteolytic processing of an antiapoptotic form of opa1 which prevents the release of mitochondrial cytochrome c in response to intrinsic apoptotic signals. The sequence is that of Presenilin-associated rhomboid-like protein A, mitochondrial (parla) from Danio rerio (Zebrafish).